Consider the following 333-residue polypeptide: Holliday junction branch migration complex subunit RuvB (333 aa).

Positions Met1–Tyr182 are large ATPase domain (RuvB-L). Residues Leu21, Arg22, Gly63, Lys66, Thr67, Thr68, Glu129–Phe131, Arg172, Tyr182, and Arg219 contribute to the ATP site. Position 67 (Thr67) interacts with Mg(2+). The interval Thr183–Gln253 is small ATPAse domain (RuvB-S). Residues Lys256–Ile333 are head domain (RuvB-H). Arg311 and Arg316 together coordinate DNA.

The protein belongs to the RuvB family. Homohexamer. Forms an RuvA(8)-RuvB(12)-Holliday junction (HJ) complex. HJ DNA is sandwiched between 2 RuvA tetramers; dsDNA enters through RuvA and exits via RuvB. An RuvB hexamer assembles on each DNA strand where it exits the tetramer. Each RuvB hexamer is contacted by two RuvA subunits (via domain III) on 2 adjacent RuvB subunits; this complex drives branch migration. In the full resolvosome a probable DNA-RuvA(4)-RuvB(12)-RuvC(2) complex forms which resolves the HJ.

It is found in the cytoplasm. The catalysed reaction is ATP + H2O = ADP + phosphate + H(+). Functionally, the RuvA-RuvB-RuvC complex processes Holliday junction (HJ) DNA during genetic recombination and DNA repair, while the RuvA-RuvB complex plays an important role in the rescue of blocked DNA replication forks via replication fork reversal (RFR). RuvA specifically binds to HJ cruciform DNA, conferring on it an open structure. The RuvB hexamer acts as an ATP-dependent pump, pulling dsDNA into and through the RuvAB complex. RuvB forms 2 homohexamers on either side of HJ DNA bound by 1 or 2 RuvA tetramers; 4 subunits per hexamer contact DNA at a time. Coordinated motions by a converter formed by DNA-disengaged RuvB subunits stimulates ATP hydrolysis and nucleotide exchange. Immobilization of the converter enables RuvB to convert the ATP-contained energy into a lever motion, pulling 2 nucleotides of DNA out of the RuvA tetramer per ATP hydrolyzed, thus driving DNA branch migration. The RuvB motors rotate together with the DNA substrate, which together with the progressing nucleotide cycle form the mechanistic basis for DNA recombination by continuous HJ branch migration. Branch migration allows RuvC to scan DNA until it finds its consensus sequence, where it cleaves and resolves cruciform DNA. The chain is Holliday junction branch migration complex subunit RuvB from Bacillus cytotoxicus (strain DSM 22905 / CIP 110041 / 391-98 / NVH 391-98).